The sequence spans 164 residues: MTIAIYAGSFDPVTNGHMDVLKGALRLADEVIVAIGVHPGKKPLFTFEERVALIGESSKAILGKDAGRVSVISFDGLVIDAARKHAAQLMVRGLRDGTDLDYEMQMAGMNGTMAPELQTVFLPADPAVRTITATLVRQIASMGGDIKPFVPAAVAAALNTKFKS.

Serine 9 lines the substrate pocket. Residues 9 to 10 (SF) and histidine 17 contribute to the ATP site. Substrate-binding residues include lysine 41, valine 78, and arginine 92. Residues 93–95 (GLR), glutamate 103, and 128–134 (VRTITAT) contribute to the ATP site.

This sequence belongs to the bacterial CoaD family. As to quaternary structure, homohexamer. Mg(2+) is required as a cofactor.

Its subcellular location is the cytoplasm. It catalyses the reaction (R)-4'-phosphopantetheine + ATP + H(+) = 3'-dephospho-CoA + diphosphate. Its pathway is cofactor biosynthesis; coenzyme A biosynthesis; CoA from (R)-pantothenate: step 4/5. In terms of biological role, reversibly transfers an adenylyl group from ATP to 4'-phosphopantetheine, yielding dephospho-CoA (dPCoA) and pyrophosphate. The protein is Phosphopantetheine adenylyltransferase of Brucella anthropi (strain ATCC 49188 / DSM 6882 / CCUG 24695 / JCM 21032 / LMG 3331 / NBRC 15819 / NCTC 12168 / Alc 37) (Ochrobactrum anthropi).